We begin with the raw amino-acid sequence, 171 residues long: NADH-quinone oxidoreductase subunit B (171 aa).

Residues cysteine 34, cysteine 35, cysteine 99, and cysteine 128 each contribute to the [4Fe-4S] cluster site.

This sequence belongs to the complex I 20 kDa subunit family. NDH-1 is composed of 14 different subunits. Subunits NuoB, C, D, E, F, and G constitute the peripheral sector of the complex. [4Fe-4S] cluster is required as a cofactor.

It is found in the cell inner membrane. The catalysed reaction is a quinone + NADH + 5 H(+)(in) = a quinol + NAD(+) + 4 H(+)(out). Functionally, NDH-1 shuttles electrons from NADH, via FMN and iron-sulfur (Fe-S) centers, to quinones in the respiratory chain. The immediate electron acceptor for the enzyme in this species is believed to be ubiquinone. Couples the redox reaction to proton translocation (for every two electrons transferred, four hydrogen ions are translocated across the cytoplasmic membrane), and thus conserves the redox energy in a proton gradient. The sequence is that of NADH-quinone oxidoreductase subunit B from Sulfurihydrogenibium sp. (strain YO3AOP1).